The following is a 135-amino-acid chain: NADH-quinone oxidoreductase subunit A (135 aa).

The next 3 membrane-spanning stretches (helical) occupy residues 9–29, 67–87, and 97–117; these read YFPI…LLTV, VGML…WVVV, and LFGF…FFYI.

It belongs to the complex I subunit 3 family. As to quaternary structure, NDH-1 is composed of 14 different subunits. Subunits NuoA, H, J, K, L, M, N constitute the membrane sector of the complex.

It is found in the cell inner membrane. It carries out the reaction a quinone + NADH + 5 H(+)(in) = a quinol + NAD(+) + 4 H(+)(out). Its function is as follows. NDH-1 shuttles electrons from NADH, via FMN and iron-sulfur (Fe-S) centers, to quinones in the respiratory chain. The immediate electron acceptor for the enzyme in this species is believed to be ubiquinone. Couples the redox reaction to proton translocation (for every two electrons transferred, four hydrogen ions are translocated across the cytoplasmic membrane), and thus conserves the redox energy in a proton gradient. This Solibacter usitatus (strain Ellin6076) protein is NADH-quinone oxidoreductase subunit A.